Here is a 520-residue protein sequence, read N- to C-terminus: GMP synthase [glutamine-hydrolyzing] (520 aa).

A Glutamine amidotransferase type-1 domain is found at 13–205 (KIIVLDYGSQ…ALNICKAKGD (193 aa)). Catalysis depends on Cys-90, which acts as the Nucleophile. Active-site residues include His-179 and Glu-181. The GMPS ATP-PPase domain occupies 206–395 (WSMDNFIDMQ…LGMPDHIVWR (190 aa)). 233-239 (SGGVDSS) contacts ATP.

In terms of assembly, homodimer.

The enzyme catalyses XMP + L-glutamine + ATP + H2O = GMP + L-glutamate + AMP + diphosphate + 2 H(+). It participates in purine metabolism; GMP biosynthesis; GMP from XMP (L-Gln route): step 1/1. Catalyzes the synthesis of GMP from XMP. In Streptococcus pneumoniae serotype 2 (strain D39 / NCTC 7466), this protein is GMP synthase [glutamine-hydrolyzing].